We begin with the raw amino-acid sequence, 469 residues long: MGRNVKTKAKRKNKKKAEASSSEIPSIPTRVWQPGVDTLEDGEELQCDPSAYNSLHGFHVGWPCLSFDILGDKLGLNRTEFPHTLYMVAGTQAEKAAHNSIGLFKITNVSGKRRDVVPKTFGNGEDEDEDDEDDSDSDDDDGDEASKTPNIQVRRVAHHGCVNRIRAMPQNSHICVSWADSGHVQVWDMSSHLNALAESETEGKDGTSPVLNQAPLVNFSGHKDEGYAIDWSPATAGRLLSGDCKSMIHLWEPASGSWAVDPIPFAGHTASVEDLQWSPAEENVFASCSVDGSVAVWDIRLGKSPALSFKAHNADVNVISWNRLASCMLASGSDDGTFSIRDLRLIKGGDAVVAHFEYHKHPITSIEWSAHEASTLAVTSGDNQLTIWDLSLEKDEEEEAEFNAQTKELVNTPQDLPPQLLFVHQGQKDLKELHWHNQIPGMIISTAGDGFNILMPYNIQNTLPSELPA.

Positions 1 to 15 (MGRNVKTKAKRKNKK) are enriched in basic residues. 2 disordered regions span residues 1-29 (MGRN…SIPT) and 115-150 (DVVP…KTPN). Positions 124–143 (GEDEDEDDEDDSDSDDDDGD) are enriched in acidic residues. WD repeat units follow at residues 157 to 197 (AHHG…NALA), 221 to 261 (GHKD…WAVD), 267 to 307 (GHTA…SPAL), 311 to 351 (AHNA…GGDA), 358 to 398 (YHKH…DEEE), and 425 to 464 (QGQK…NTLP).

This sequence belongs to the WD repeat RBAP46/RBAP48/MSI1 family. As to quaternary structure, probable component of CULLIN4 (CUL4) RING ligase (CRL4) complexes. Interacts with DDB1A and DDB1B. Associates with HSP90-1.

The protein operates within protein modification; protein ubiquitination. Probable substrate receptor of CRL4 E3 ligase complexes acting as negative regulators of thermotolerance by disturbing the action of HSP90-1 and by preventing the expression of heat-inducible genes (e.g. HSP14.7, HSP21, At2g03020 and WRKY28). The sequence is that of Protein HEAT STRESS TOLERANT DWD 1 from Arabidopsis thaliana (Mouse-ear cress).